Consider the following 632-residue polypeptide: Arginine--tRNA ligase (632 aa).

Positions 120–130 (ANPIHPLHIGH) match the 'HIGH' region motif.

It belongs to the class-I aminoacyl-tRNA synthetase family.

It is found in the cytoplasm. The enzyme catalyses tRNA(Arg) + L-arginine + ATP = L-arginyl-tRNA(Arg) + AMP + diphosphate. The polypeptide is Arginine--tRNA ligase (Pyrobaculum islandicum (strain DSM 4184 / JCM 9189 / GEO3)).